Here is a 959-residue protein sequence, read N- to C-terminus: Protein moonraker (959 aa).

Positions 124-156 are disordered; sequence LPHSSHKGMHTKVERKDSKSQDVCHCSHQPSRV. Residues 134–145 show a composition bias toward basic and acidic residues; sequence TKVERKDSKSQD. The residue at position 279 (Ser279) is a Phosphoserine. A compositionally biased stretch (basic and acidic residues) spans 456 to 470; the sequence is EEAPRIEDNGTDFKD. Disordered regions lie at residues 456-560 and 572-610; these read EEAP…ASPK and RDAA…AESS. Positions 515 to 533 are enriched in polar residues; that stretch reads PNQPYSKSRLQQTTVSSRL. The span at 547 to 558 shows a compositional bias: pro residues; it reads WIPPNPTSPPAS. The stretch at 582 to 674 forms a coiled coil; the sequence is QEDIHKESQL…TQLADKVEEA (93 aa). Residues 583–599 are compositionally biased toward basic and acidic residues; that stretch reads EDIHKESQLRGDAEQEA. Ser691 is subject to Phosphoserine. 2 disordered regions span residues 692 to 721 and 848 to 883; these read SVEA…SDVP and LDES…PLSV. Residues 707 to 717 are compositionally biased toward low complexity; sequence AAAAAQPAEQA. Basic and acidic residues predominate over residues 857–874; the sequence is GSEKREAPLPLSREDLHQ. The tract at residues 877-959 is necessary and sufficient for CEP20-binding; it reads GQTPLSVPPR…FTSEFLEAAA (83 aa).

In terms of assembly, interacts with CEP63 and WDR62. Forms a complex with OFD1 and CEP20/FOR20. Interacts with PCM1.

Its subcellular location is the cytoplasm. The protein resides in the cytoskeleton. It localises to the microtubule organizing center. The protein localises to the centrosome. It is found in the centriolar satellite. In terms of biological role, involved in centriole duplication. Positively regulates CEP63 centrosomal localization. Required for WDR62 centrosomal localization and promotes the centrosomal localization of CDK2. May play a role in cilium assembly. This is Protein moonraker (Kiaa0753) from Mus musculus (Mouse).